Reading from the N-terminus, the 309-residue chain is Porphobilinogen deaminase (309 aa).

Residue Cys-241 is modified to S-(dipyrrolylmethanemethyl)cysteine.

This sequence belongs to the HMBS family. Monomer. The cofactor is dipyrromethane.

It carries out the reaction 4 porphobilinogen + H2O = hydroxymethylbilane + 4 NH4(+). It participates in porphyrin-containing compound metabolism; protoporphyrin-IX biosynthesis; coproporphyrinogen-III from 5-aminolevulinate: step 2/4. Its function is as follows. Tetrapolymerization of the monopyrrole PBG into the hydroxymethylbilane pre-uroporphyrinogen in several discrete steps. The protein is Porphobilinogen deaminase of Bacillus cereus (strain ZK / E33L).